A 453-amino-acid polypeptide reads, in one-letter code: Homogentisate 1,2-dioxygenase (453 aa).

The active-site Proton acceptor is the H306. 2 residues coordinate Fe cation: H349 and E355. The homogentisate site is built by Y364 and H385. Fe cation is bound at residue H385.

Belongs to the homogentisate dioxygenase family. Hexamer; dimer of trimers. Fe cation serves as cofactor.

The catalysed reaction is homogentisate + O2 = 4-maleylacetoacetate + H(+). It participates in amino-acid degradation; L-phenylalanine degradation; acetoacetate and fumarate from L-phenylalanine: step 4/6. Functionally, involved in the catabolism of homogentisate (2,5-dihydroxyphenylacetate or 2,5-OH-PhAc), a central intermediate in the degradation of phenylalanine and tyrosine. Catalyzes the oxidative ring cleavage of the aromatic ring of homogentisate to yield maleylacetoacetate. The protein is Homogentisate 1,2-dioxygenase of Rhizobium rhizogenes (strain K84 / ATCC BAA-868) (Agrobacterium radiobacter).